A 702-amino-acid chain; its full sequence is Pentatricopeptide repeat-containing protein At4g16390, chloroplastic (702 aa).

The transit peptide at 1-53 (MSFHHLCSSPSSLLHDPLPLCNLLSVYPKSTPRSFLSSYNPNSSHFHSRNLLQ) directs the protein to the chloroplast. PPR repeat units follow at residues 174 to 208 (EVIL…GIKP), 209 to 243 (DNAT…GCEP), 244 to 278 (DNVT…KWRI), 279 to 313 (DAVT…GVKP), 314 to 348 (NLVI…GFTP), 349 to 383 (NWST…GLSL), 384 to 414 (TVIL…MKNC), 420 to 454 (DSWT…GFEP), and 455 to 489 (TLFV…GITP). Residues 603 to 688 (LHLKSLSLGA…WFLTTSVAAK (86 aa)) enclose the Smr domain.

This sequence belongs to the PPR family. P subfamily. Expressed in leaves and flowers and at lower levels in stems and flower buds.

Its subcellular location is the plastid. The protein resides in the chloroplast. Its function is as follows. Involved in chloroplast RNA processing. Can bind RNA. Involved in chloroplast development. Involved in chloroplast ribosomal RNA (rRNA) processing and/or translation. Required for FtsH-mediated chloroplast biogenesis. Involved in translation and accumulation of chloroplast ATP synthase subunits. This Arabidopsis thaliana (Mouse-ear cress) protein is Pentatricopeptide repeat-containing protein At4g16390, chloroplastic.